The primary structure comprises 401 residues: Acetate kinase (401 aa).

Asn-7 contacts Mg(2+). ATP is bound at residue Lys-14. Arg-92 contributes to the substrate binding site. The active-site Proton donor/acceptor is the Asp-149. Residues 209–213 (HLGNG), 283–285 (DAR), and 331–335 (GLGEN) each bind ATP. Glu-385 contributes to the Mg(2+) binding site.

This sequence belongs to the acetokinase family. In terms of assembly, homodimer. Mg(2+) serves as cofactor. Mn(2+) is required as a cofactor.

It localises to the cytoplasm. It carries out the reaction acetate + ATP = acetyl phosphate + ADP. It participates in metabolic intermediate biosynthesis; acetyl-CoA biosynthesis; acetyl-CoA from acetate: step 1/2. In terms of biological role, catalyzes the formation of acetyl phosphate from acetate and ATP. Can also catalyze the reverse reaction. The protein is Acetate kinase of Helicobacter pylori (strain Shi470).